Reading from the N-terminus, the 177-residue chain is ATP synthase subunit delta 1 (177 aa).

Belongs to the ATPase delta chain family. In terms of assembly, F-type ATPases have 2 components, F(1) - the catalytic core - and F(0) - the membrane proton channel. F(1) has five subunits: alpha(3), beta(3), gamma(1), delta(1), epsilon(1). F(0) has three main subunits: a(1), b(2) and c(10-14). The alpha and beta chains form an alternating ring which encloses part of the gamma chain. F(1) is attached to F(0) by a central stalk formed by the gamma and epsilon chains, while a peripheral stalk is formed by the delta and b chains.

It localises to the cell inner membrane. In terms of biological role, f(1)F(0) ATP synthase produces ATP from ADP in the presence of a proton or sodium gradient. F-type ATPases consist of two structural domains, F(1) containing the extramembraneous catalytic core and F(0) containing the membrane proton channel, linked together by a central stalk and a peripheral stalk. During catalysis, ATP synthesis in the catalytic domain of F(1) is coupled via a rotary mechanism of the central stalk subunits to proton translocation. Its function is as follows. This protein is part of the stalk that links CF(0) to CF(1). It either transmits conformational changes from CF(0) to CF(1) or is implicated in proton conduction. This chain is ATP synthase subunit delta 1, found in Photobacterium profundum (strain SS9).